Consider the following 145-residue polypeptide: D-aminoacyl-tRNA deacylase (145 aa).

A Gly-cisPro motif, important for rejection of L-amino acids motif is present at residues 137–138 (GP).

This sequence belongs to the DTD family. In terms of assembly, homodimer.

It is found in the cytoplasm. The catalysed reaction is glycyl-tRNA(Ala) + H2O = tRNA(Ala) + glycine + H(+). The enzyme catalyses a D-aminoacyl-tRNA + H2O = a tRNA + a D-alpha-amino acid + H(+). In terms of biological role, an aminoacyl-tRNA editing enzyme that deacylates mischarged D-aminoacyl-tRNAs. Also deacylates mischarged glycyl-tRNA(Ala), protecting cells against glycine mischarging by AlaRS. Acts via tRNA-based rather than protein-based catalysis; rejects L-amino acids rather than detecting D-amino acids in the active site. By recycling D-aminoacyl-tRNA to D-amino acids and free tRNA molecules, this enzyme counteracts the toxicity associated with the formation of D-aminoacyl-tRNA entities in vivo and helps enforce protein L-homochirality. The protein is D-aminoacyl-tRNA deacylase of Lactobacillus gasseri (strain ATCC 33323 / DSM 20243 / BCRC 14619 / CIP 102991 / JCM 1131 / KCTC 3163 / NCIMB 11718 / NCTC 13722 / AM63).